A 1205-amino-acid polypeptide reads, in one-letter code: Nitric oxide synthase 3 (1205 aa).

The tract at residues 1-73 (MGNLKSVGQE…PPDGPKFPRV (73 aa)) is disordered. The N-myristoyl glycine moiety is linked to residue G2. Residues C15 and C26 are each lipidated (S-palmitoyl cysteine). Positions 15 to 27 (CGLGLGLGLGLCG) are enriched in gly residues. The span at 44–54 (LAPPPSPPPAP) shows a compositional bias: pro residues. Zn(2+) is bound by residues C96 and C101. An interaction with NOSIP region spans residues 100–488 (RCLGSLVFPR…TDPWKGSASK (389 aa)). Residue S104 participates in (6R)-L-erythro-5,6,7,8-tetrahydrobiopterin binding. At S116 the chain carries Phosphoserine; by CDK5. C186 lines the heme b pocket. L-arginine contacts are provided by Q249, W358, Y359, E363, and N368. Residues A448, W449, and F462 each contribute to the (6R)-L-erythro-5,6,7,8-tetrahydrobiopterin site. Y477 contacts heme b. The segment at 492-512 (VTRKKTFKEVANAVKISASLM) is calmodulin-binding. Position 497 is a phosphothreonine; by AMPK (T497). The Flavodoxin-like domain occupies 522-705 (ATILYGSETG…AFGGWAQAAF (184 aa)). FMN is bound by residues S528, E529, T530, R532, S574, and T575. S617, S635, and S640 each carry phosphoserine. S656, C663, E689, and Q693 together coordinate FMN. The region spanning 758–1004 (RKMVQATVLA…IRGAPSFRLP (247 aa)) is the FAD-binding FR-type domain. Residue R778 participates in NADP(+) binding. An FAD-binding site is contributed by H800. The interval 819-850 (VEDPPPPGEPVAVEQLEKGSPGGPPPSWVRDP) is disordered. S838 is subject to Phosphoserine. FAD contacts are provided by R940, Y942, S943, T958, A960, Y964, V977, C978, and S979. 7 residues coordinate NADP(+): T1018, R1051, S1080, R1081, K1087, Y1089, and Q1091. A Phosphothreonine modification is found at T1177. Residue S1179 is modified to Phosphoserine; by AMPK. Residue S1181 is modified to Phosphoserine.

Belongs to the NOS family. Homodimer. Interacts with NOSIP and NOSTRIN. Interacts with HSP90AB1. Forms a complex with ASL, ASS1 and SLC7A1; the complex regulates cell-autonomous L-arginine synthesis and citrulline recycling while channeling extracellular L-arginine to nitric oxide synthesis pathway. Heme b is required as a cofactor. Requires FAD as cofactor. The cofactor is FMN. (6R)-L-erythro-5,6,7,8-tetrahydrobiopterin serves as cofactor. In terms of processing, phosphorylation by AMPK at Ser-1179 in the presence of Ca(2+)-calmodulin (CaM) activates activity. In absence of Ca(2+)-calmodulin, AMPK also phosphorylates Thr-497, resulting in inhibition of activity. Phosphorylation of Ser-116 by CDK5 reduces activity.

The protein localises to the membrane. Its subcellular location is the caveola. It is found in the cytoplasm. The protein resides in the cytoskeleton. It localises to the golgi apparatus. The protein localises to the cell membrane. It catalyses the reaction 2 L-arginine + 3 NADPH + 4 O2 + H(+) = 2 L-citrulline + 2 nitric oxide + 3 NADP(+) + 4 H2O. Its activity is regulated as follows. Stimulated by calcium/calmodulin. Inhibited by NOSIP and NOSTRIN. Functionally, produces nitric oxide (NO) which is implicated in vascular smooth muscle relaxation through a cGMP-mediated signal transduction pathway. NO mediates vascular endothelial growth factor (VEGF)-induced angiogenesis in coronary vessels and promotes blood clotting through the activation of platelets. This is Nitric oxide synthase 3 (NOS3) from Canis lupus familiaris (Dog).